A 232-amino-acid chain; its full sequence is Glutathione-specific gamma-glutamylcyclotransferase (232 aa).

10-15 serves as a coordination point for substrate; it reads VLGYGS. E115 acts as the Proton acceptor in catalysis.

It belongs to the gamma-glutamylcyclotransferase family. ChaC subfamily.

The protein resides in the cytoplasm. The protein localises to the nucleus. It carries out the reaction glutathione = L-cysteinylglycine + 5-oxo-L-proline. Catalyzes the cleavage of glutathione into 5-oxo-L-proline and a Cys-Gly dipeptide. Acts specifically on glutathione, but not on other gamma-glutamyl peptides. Allows utilization of gluthathione through subsequent cleavage of the Cys-Gly dipeptide by Cys-Gly metallodipeptidase DUG1. The protein is Glutathione-specific gamma-glutamylcyclotransferase of Saccharomyces cerevisiae (strain ATCC 204508 / S288c) (Baker's yeast).